The primary structure comprises 409 residues: MQILTLISWDFKRNNNFFNQAVLNPYEYWADILEKNGISRYVILLTCNRVEIYLRAGFPEDLEAMKPNVLHDEEAIKHLMEVSSGLDSMSLGENEILKQVKEAYELSVRNGKVDKVLSLIFQKAIFVGKKVRSETEISRGKVSVPSIVYDILSSRVVQKVLIIGNGMIAGEIAPYLSGKFEVTIAGRNIDHVKDLASKYNYSYTTINDLHELIMRNDAIISATSSKTPIIRREEMVEGKLYIDLGNPRNIEDKPGADIITIDDIYSVSNRNGSARMESVDEARRIIEIEMASLMNKIKDVMIDEIFADFYKFAVVVQKMEIEKFSRMHPEIPASDVEAFAHSMINKVMNIPVMTLKSVARSQSNQDFSRIFSKFYDNFSDLVSAALQSYEGRQDTQSLRDRTRRLLQRS.

Substrate contacts are provided by residues 46-49 (TCNR), Ser-88, 93-95 (ENE), and Gln-99. The active-site Nucleophile is the Cys-47. Position 164–169 (164–169 (GNGMIA)) interacts with NADP(+).

This sequence belongs to the glutamyl-tRNA reductase family. In terms of assembly, homodimer.

The enzyme catalyses (S)-4-amino-5-oxopentanoate + tRNA(Glu) + NADP(+) = L-glutamyl-tRNA(Glu) + NADPH + H(+). It participates in porphyrin-containing compound metabolism; protoporphyrin-IX biosynthesis; 5-aminolevulinate from L-glutamyl-tRNA(Glu): step 1/2. Catalyzes the NADPH-dependent reduction of glutamyl-tRNA(Glu) to glutamate 1-semialdehyde (GSA). The sequence is that of Glutamyl-tRNA reductase from Thermoplasma acidophilum (strain ATCC 25905 / DSM 1728 / JCM 9062 / NBRC 15155 / AMRC-C165).